Consider the following 102-residue polypeptide: Apolipoprotein A-II (102 aa).

An N-terminal signal peptide occupies residues 1-18 (MKLLAMVALLVTICSLEG). Methionine 49 is modified (methionine sulfoxide).

This sequence belongs to the apolipoprotein A2 family. As to quaternary structure, monomer. Interacts with NAXE and NDRG1. Plasma.

Its subcellular location is the secreted. Its function is as follows. May stabilize HDL (high density lipoprotein) structure by its association with lipids, and affect the HDL metabolism. In Rattus norvegicus (Rat), this protein is Apolipoprotein A-II (Apoa2).